The sequence spans 316 residues: Transcription factor MafB (316 aa).

Disordered stretches follow at residues 40 to 78 (PDRA…SPTE) and 116 to 204 (HQMP…EDRF). The span at 55–77 (SVSSTPISTPCSSVPSSPSFSPT) shows a compositional bias: low complexity. Basic residues-rich tracts occupy residues 130–144 (GHHH…HQNH) and 160–172 (QHPH…HHHQ). Residues 177-198 (PSGSSSSSQQLQNSHQQHQNSS) are compositionally biased toward low complexity. A basic motif region spans residues 231-256 (RLKQKRRTLKNRGYAQSCRFKRVQQK). Positions 231–294 (RLKQKRRTLK…DAYKIKCEKL (64 aa)) constitute a bZIP domain. The segment at 259–280 (LENEKTQLIQQVEQLKLEVSRL) is leucine-zipper.

This sequence belongs to the bZIP family. Maf subfamily. As to quaternary structure, homodimer or heterodimer with other bHLH-Zip transcription factors. Binds DNA as a homodimer or a heterodimer.

It is found in the nucleus. Functionally, acts as a transcriptional activator or repressor. Implicated in the regulation of cell-type specific gene expression and play a role in inductive events during lens development. The protein is Transcription factor MafB (mafb) of Xenopus tropicalis (Western clawed frog).